A 166-amino-acid chain; its full sequence is Putative membrane protein 162 (166 aa).

Residue Met1 is a topological domain, intravirion. The helical transmembrane segment at 2–22 (YYPAVQVLIGIILVDNFNTEF) threads the bilayer. Residues 23–166 (LSSEKKNCKT…TIMGIARNIL (144 aa)) lie on the Virion surface side of the membrane.

The protein belongs to the asfivirus envelope protein p22 family.

Its subcellular location is the virion membrane. The protein resides in the host cell membrane. The chain is Putative membrane protein 162 from African swine fever virus (isolate Tick/Malawi/Lil 20-1/1983) (ASFV).